The chain runs to 447 residues: GTPase Der (447 aa).

EngA-type G domains follow at residues 2–166 (YRVA…PEYE) and 183–358 (IKVA…NQSW). GTP contacts are provided by residues 8 to 15 (GRPNVGKS), 55 to 59 (DTGGY), 118 to 121 (NKID), 189 to 196 (GKPNAGKS), 236 to 240 (DTAGL), and 301 to 304 (NKID). A KH-like domain is found at 359–443 (KRVGTGQLNR…PIKLLLRGKE (85 aa)).

The protein belongs to the TRAFAC class TrmE-Era-EngA-EngB-Septin-like GTPase superfamily. EngA (Der) GTPase family. In terms of assembly, associates with the 50S ribosomal subunit.

Functionally, GTPase that plays an essential role in the late steps of ribosome biogenesis. The sequence is that of GTPase Der from Persephonella marina (strain DSM 14350 / EX-H1).